Here is a 301-residue protein sequence, read N- to C-terminus: Transmembrane protein 178A (301 aa).

Residues 1–25 form the signal peptide; the sequence is MEKRALVTAISLSMSLLALMLLVTA. Residues 26 to 183 lie on the Extracellular side of the membrane; it reads IFTDHWYETD…LLHLRRITAG (158 aa). N162 is a glycosylation site (N-linked (GlcNAc...) asparagine). The chain crosses the membrane as a helical span at residues 184-204; that stretch reads FLGMAAAVMLCGSIVAAVGFF. Over 205–215 the chain is Cytoplasmic; that stretch reads WEESLTQHVSG. The helical transmembrane segment at 216 to 236 threads the bilayer; it reads LLFLMAGIFCTISLCTYAASV. Residues 237 to 258 lie on the Extracellular side of the membrane; sequence SYDLSRNPPFIYGLPSDVDHGY. A helical membrane pass occupies residues 259 to 279; that stretch reads GWSIFCAWVSLGLTVASGCIC. The Cytoplasmic segment spans residues 280-301; it reads TTYPFLSRTKALRSKTARESSV.

The protein belongs to the TMEM178 family.

It is found in the endoplasmic reticulum membrane. May act as a negative regulator of osteoclast differentiation. The chain is Transmembrane protein 178A (tmem178a) from Danio rerio (Zebrafish).